Here is a 167-residue protein sequence, read N- to C-terminus: Mediator of RNA polymerase II transcription subunit 10 (167 aa).

Residues 53 to 88 (LSTHTKPQPPSQDEEQKEKQDDTPEGSANDPLLRDI) are disordered.

The protein belongs to the Mediator complex subunit 10 family. Component of the Mediator complex.

The protein resides in the nucleus. Functionally, component of the Mediator complex, a coactivator involved in the regulated transcription of nearly all RNA polymerase II-dependent genes. Mediator functions as a bridge to convey information from gene-specific regulatory proteins to the basal RNA polymerase II transcription machinery. Mediator is recruited to promoters by direct interactions with regulatory proteins and serves as a scaffold for the assembly of a functional preinitiation complex with RNA polymerase II and the general transcription factors. The sequence is that of Mediator of RNA polymerase II transcription subunit 10 (nut2) from Neosartorya fischeri (strain ATCC 1020 / DSM 3700 / CBS 544.65 / FGSC A1164 / JCM 1740 / NRRL 181 / WB 181) (Aspergillus fischerianus).